Here is a 475-residue protein sequence, read N- to C-terminus: Bifunctional purple acid phosphatase 26 (475 aa).

Positions 1 to 30 (MNHLVIISVFLSSVLLLYRGESGITSSFIR) are cleaved as a signal peptide. The N-linked (GlcNAc...) asparagine glycan is linked to asparagine 103. The Fe cation site is built by aspartate 162, aspartate 189, and tyrosine 192. Zn(2+) is bound at residue aspartate 189. The Zn(2+) site is built by asparagine 227 and histidine 312. Substrate is bound at residue asparagine 227. Histidine 322 serves as the catalytic Proton donor. Position 349 (histidine 349) interacts with Zn(2+). 349–351 (HVH) contacts substrate. Histidine 351 lines the Fe cation pocket. N-linked (GlcNAc...) asparagine glycans are attached at residues asparagine 365 and asparagine 422.

It belongs to the metallophosphoesterase superfamily. Purple acid phosphatase family. As to quaternary structure, homodimer. Fe cation is required as a cofactor. Requires Zn(2+) as cofactor. In terms of processing, glycosylated. In terms of tissue distribution, expressed in roots, stems, leaves, flowers and siliques.

Its subcellular location is the vacuole. The enzyme catalyses a phosphate monoester + H2O = an alcohol + phosphate. It carries out the reaction 2 a phenolic donor + H2O2 = 2 a phenolic radical donor + 2 H2O. Activated by Mg(2+), Co(2+), Mn(2+) and Ba(2+). Inhibited by Fe(2+), Cu(2+), Zn(2+), NaF, molybdate, arsenate, vanadate and inorganic phosphate. No effect of tartrate, Asp, Gln, glutathione, Asn, ascorbic acid and phosphite. Its function is as follows. Metallo-phosphoesterase involved in phosphate metabolism. Acid phosphatase activity with phosphoenolpyruvate, inorganic pyrophosphate, phenyl-phosphate and p-nitrophenyl-phosphate as the most effective substrates. No activity with phytic acid, phosphocholine or bis-p-nitrophenyl-phosphate. Has a peroxidase activity at alkaline pH. This Arabidopsis thaliana (Mouse-ear cress) protein is Bifunctional purple acid phosphatase 26 (PAP26).